Consider the following 154-residue polypeptide: Calmodulin-like protein 6 (154 aa).

EF-hand domains are found at residues 1-36 (MDST…LGII), 37-72 (IPED…IMVE), 77-112 (VGEE…LGLK), and 115-150 (KTLE…GRFF). Asp14, Asp16, Asp18, Lys20, Glu25, Asp50, Asn52, Asp54, Cys56, Glu61, Asp90, Asn92, Asp94, Glu101, Asp128, Asp130, Asp132, Arg134, and Glu139 together coordinate Ca(2+).

Belongs to the calmodulin family.

In terms of biological role, potential calcium sensor. In Arabidopsis thaliana (Mouse-ear cress), this protein is Calmodulin-like protein 6 (CML6).